The chain runs to 286 residues: Neuferricin homolog (286 aa).

Positions 1–23 (MFGFVKYLFKLQFLFILAAVLAG) are cleaved as a signal peptide. The Cytochrome b5 heme-binding domain occupies 61–145 (ATVLTSAELS…KPNDLLGLAN (85 aa)). The stretch at 176–200 (HKYLALLEQAQIAKAEVDELRSKYP) forms a coiled coil.

Belongs to the cytochrome b5 family. MAPR subfamily.

The protein resides in the secreted. Heme-binding protein. This chain is Neuferricin homolog, found in Drosophila pseudoobscura pseudoobscura (Fruit fly).